The primary structure comprises 83 residues: Exodeoxyribonuclease 7 small subunit (83 aa).

Belongs to the XseB family. As to quaternary structure, heterooligomer composed of large and small subunits.

It is found in the cytoplasm. The catalysed reaction is Exonucleolytic cleavage in either 5'- to 3'- or 3'- to 5'-direction to yield nucleoside 5'-phosphates.. Functionally, bidirectionally degrades single-stranded DNA into large acid-insoluble oligonucleotides, which are then degraded further into small acid-soluble oligonucleotides. This is Exodeoxyribonuclease 7 small subunit from Heliobacterium modesticaldum (strain ATCC 51547 / Ice1).